A 391-amino-acid chain; its full sequence is Transaldolase (391 aa).

Lys-134 (schiff-base intermediate with substrate) is an active-site residue. 2 consecutive EF-hand domains span residues 329-364 (TLTH…FDAL) and 365-387 (DANH…VLHL). Residues Asp-342, Asp-344, Asp-346, Glu-353, Asp-365, Asn-367, Asp-369, Lys-371, and Asp-376 each contribute to the Ca(2+) site.

The protein belongs to the transaldolase family. Type 1 subfamily.

It is found in the cytoplasm. It catalyses the reaction D-sedoheptulose 7-phosphate + D-glyceraldehyde 3-phosphate = D-erythrose 4-phosphate + beta-D-fructose 6-phosphate. It functions in the pathway carbohydrate degradation; pentose phosphate pathway; D-glyceraldehyde 3-phosphate and beta-D-fructose 6-phosphate from D-ribose 5-phosphate and D-xylulose 5-phosphate (non-oxidative stage): step 2/3. Transaldolase is important for the balance of metabolites in the pentose-phosphate pathway. In Thermosynechococcus vestitus (strain NIES-2133 / IAM M-273 / BP-1), this protein is Transaldolase.